Here is a 343-residue protein sequence, read N- to C-terminus: uncharacterized protein (343 aa).

This is an uncharacterized protein from Saccharolobus islandicus (Sulfolobus islandicus).